Here is a 284-residue protein sequence, read N- to C-terminus: L-ribulose-5-phosphate 3-epimerase UlaE (284 aa).

It belongs to the L-ribulose-5-phosphate 3-epimerase family.

The enzyme catalyses L-ribulose 5-phosphate = L-xylulose 5-phosphate. It participates in cofactor degradation; L-ascorbate degradation; D-xylulose 5-phosphate from L-ascorbate: step 3/4. Its function is as follows. Catalyzes the isomerization of L-xylulose-5-phosphate to L-ribulose-5-phosphate. Is involved in the anaerobic L-ascorbate utilization. The polypeptide is L-ribulose-5-phosphate 3-epimerase UlaE (Shigella flexneri serotype 5b (strain 8401)).